A 338-amino-acid polypeptide reads, in one-letter code: Trace amine-associated receptor 9 (338 aa).

Residues 1–23 (MELCYENVNGSCIKSSYSPWPRA) lie on the Extracellular side of the membrane. A glycan (N-linked (GlcNAc...) asparagine) is linked at asparagine 9. 2 cysteine pairs are disulfide-bonded: cysteine 12–cysteine 176 and cysteine 95–cysteine 180. Residues 24 to 48 (ILYAVLGLGALLAVFGNLLVITAIL) traverse the membrane as a helical segment. Topologically, residues 49–58 (HFKQLHTPTN) are cytoplasmic. A helical transmembrane segment spans residues 59 to 80 (FLVASLACADFLVGVTVMPFST). Residues 81–95 (VRSVEGCWYFGDTYC) lie on the Extracellular side of the membrane. The helical transmembrane segment at 96-118 (KFHTCFDTSFCFASLFHLCCISI) threads the bilayer. Positions 102 and 103 each coordinate spermidine. Topologically, residues 119–138 (DRYVAVTDPLTYPTKFTISV) are cytoplasmic. The helical transmembrane segment at 139-160 (SGVCIALSWFFSVTYSFSIFYT) threads the bilayer. Over 161 to 186 (GANEEGIEELVVALTCVGGCQAPLNQ) the chain is Extracellular. Positions 164–177 (EEGIEELVVALTCV) are extracellular Loop 2 (ECL2). The chain crosses the membrane as a helical span at residues 187-208 (NWVLLCFLLFFLPTVVMVFLYG). Residues 209 to 246 (RIFLVAKQQARKIEGSANQPQASSESYKERVARRERKA) lie on the Cytoplasmic side of the membrane. A helical transmembrane segment spans residues 247–270 (AKTLGIAMAAFLVSWLPYIIDAVI). Residues 271–283 (DAYMNFITPAYVY) lie on the Extracellular side of the membrane. A helical transmembrane segment spans residues 284-304 (EILVWCVYYNSAMNPLIYAFF). The Cytoplasmic portion of the chain corresponds to 305 to 338 (YPWFRKAIKLIVSGKVFRADSSRTNLFSEEAGAG).

Belongs to the G-protein coupled receptor 1 family. Mainly expressed in neurons of the olfactory epithelium. Also expressed in the intestine.

The protein localises to the cell membrane. Functionally, olfactory receptor specific for trace amines, such as triethylamine, N-methylpiperidine, N,N-dimethylcyclohexylamine (DMCHA), beta-phenylethylamine (beta-PEA), cadaverine (CAD) and polyamines such as spermidine. Trace amine compounds are enriched in animal body fluids and act on trace amine-associated receptors (TAARs) to elicit both intraspecific and interspecific innate behaviors. Trace amine-binding causes a conformation change that triggers signaling via G(s)-class of G alpha proteins (GNAL or GNAS). In mature olfactory sensory neurons, Taar9 is coupled with GNAL/G(olf)G alpha protein and mediates activation of adenylate cyclase activity to activate cAMP signaling and eventually transmit odorant signals to achieve membrane depolarization. In immature olfactory sensory neurons, Taar9 is coupled with GNAS/G(s) G alpha proteins. The protein is Trace amine-associated receptor 9 of Rattus norvegicus (Rat).